We begin with the raw amino-acid sequence, 184 residues long: Ribosome-recycling factor (184 aa).

It belongs to the RRF family.

It localises to the cytoplasm. Functionally, responsible for the release of ribosomes from messenger RNA at the termination of protein biosynthesis. May increase the efficiency of translation by recycling ribosomes from one round of translation to another. The protein is Ribosome-recycling factor of Borrelia recurrentis (strain A1).